We begin with the raw amino-acid sequence, 375 residues long: CCA-adding enzyme (375 aa).

ATP contacts are provided by Gly8 and Arg11. The CTP site is built by Gly8 and Arg11. Mg(2+) contacts are provided by Asp21 and Asp23. 3 residues coordinate ATP: Arg91, Arg137, and Arg140. Residues Arg91, Arg137, and Arg140 each contribute to the CTP site.

Belongs to the tRNA nucleotidyltransferase/poly(A) polymerase family. Bacterial CCA-adding enzyme type 2 subfamily. Mg(2+) serves as cofactor.

The catalysed reaction is a tRNA precursor + 2 CTP + ATP = a tRNA with a 3' CCA end + 3 diphosphate. It catalyses the reaction a tRNA with a 3' CCA end + 2 CTP + ATP = a tRNA with a 3' CCACCA end + 3 diphosphate. Its function is as follows. Catalyzes the addition and repair of the essential 3'-terminal CCA sequence in tRNAs without using a nucleic acid template. Adds these three nucleotides in the order of C, C, and A to the tRNA nucleotide-73, using CTP and ATP as substrates and producing inorganic pyrophosphate. tRNA 3'-terminal CCA addition is required both for tRNA processing and repair. Also involved in tRNA surveillance by mediating tandem CCA addition to generate a CCACCA at the 3' terminus of unstable tRNAs. While stable tRNAs receive only 3'-terminal CCA, unstable tRNAs are marked with CCACCA and rapidly degraded. The sequence is that of CCA-adding enzyme from Pseudomonas entomophila (strain L48).